We begin with the raw amino-acid sequence, 194 residues long: Protein GrpE (194 aa).

Over residues 1-14 (MENTQENPTSQNPT) the composition is skewed to polar residues. The tract at residues 1–50 (MENTQENPTSQNPTPADETARQAAEAAAPQQEAAANAATDSPVNAEQSAL) is disordered. Low complexity predominate over residues 21-38 (RQAAEAAAPQQEAAANAA).

The protein belongs to the GrpE family. As to quaternary structure, homodimer.

Its subcellular location is the cytoplasm. In terms of biological role, participates actively in the response to hyperosmotic and heat shock by preventing the aggregation of stress-denatured proteins, in association with DnaK and GrpE. It is the nucleotide exchange factor for DnaK and may function as a thermosensor. Unfolded proteins bind initially to DnaJ; upon interaction with the DnaJ-bound protein, DnaK hydrolyzes its bound ATP, resulting in the formation of a stable complex. GrpE releases ADP from DnaK; ATP binding to DnaK triggers the release of the substrate protein, thus completing the reaction cycle. Several rounds of ATP-dependent interactions between DnaJ, DnaK and GrpE are required for fully efficient folding. This is Protein GrpE from Paraburkholderia phytofirmans (strain DSM 17436 / LMG 22146 / PsJN) (Burkholderia phytofirmans).